The chain runs to 291 residues: MPDFARGPAKARRADPVVDEAAELLDSRALPGMADAAGRAMMDRAMRIVPARSETRVSEQPGFVLHAWPYRETSLILDVFTRDHGRLSMVAKGAKRPHSALRPVLQHFHPISLSWSGRGEVKTLTRAEWVGGMPPLAGDALLSAFYLNELLMRFCPREDGHPALFRHYMATLTRLAHGEAAGLVLRSFERVLLQETGFAVAFDQCLSTGERVQPHLDYVYQPERGVRRAQPSDPSSWPVVSGQTLLDMSQDDYGRAQTALQSRALMRFLLHYYLQGAPLKTRQILIDLHYL.

It belongs to the RecO family.

Involved in DNA repair and RecF pathway recombination. This chain is DNA repair protein RecO, found in Cupriavidus pinatubonensis (strain JMP 134 / LMG 1197) (Cupriavidus necator (strain JMP 134)).